We begin with the raw amino-acid sequence, 144 residues long: Large ribosomal subunit protein uL15 (144 aa).

The interval 1–48 (MIKLESLQDPSPRKRRTKLLGRGPSSGHGKTSCRGHKGDGSRSGYKRR) is disordered.

It belongs to the universal ribosomal protein uL15 family. Part of the 50S ribosomal subunit.

Binds to the 23S rRNA. The sequence is that of Large ribosomal subunit protein uL15 from Chlamydia abortus (strain DSM 27085 / S26/3) (Chlamydophila abortus).